The primary structure comprises 256 residues: MIPWLPDDSDSAPFPPTRLALGPDSEAPGLLCAGGQLSVARLRMAYRLGIFPWYSQGQPVLWWSTDPRMVLQVAQFRLHRSLKKTLRRFLVTPGNEVRIDSAFADVIDHCSRTPREGQDGTWIVPEVKAAYVALHRAGSAHSFETWVDGELVGGLYGVNIGRMFYGESMFARRTDASKIALAALVAFCLAHEIAWIDCQMETEHLASLGAQPVPRAQFEAHLRRVVDLPAPKDWFYDPSSWARLGDRGPGQPSPSA.

The disordered stretch occupies residues 1–21 (MIPWLPDDSDSAPFPPTRLAL).

It belongs to the L/F-transferase family.

It localises to the cytoplasm. The catalysed reaction is N-terminal L-lysyl-[protein] + L-leucyl-tRNA(Leu) = N-terminal L-leucyl-L-lysyl-[protein] + tRNA(Leu) + H(+). It carries out the reaction N-terminal L-arginyl-[protein] + L-leucyl-tRNA(Leu) = N-terminal L-leucyl-L-arginyl-[protein] + tRNA(Leu) + H(+). It catalyses the reaction L-phenylalanyl-tRNA(Phe) + an N-terminal L-alpha-aminoacyl-[protein] = an N-terminal L-phenylalanyl-L-alpha-aminoacyl-[protein] + tRNA(Phe). Its function is as follows. Functions in the N-end rule pathway of protein degradation where it conjugates Leu, Phe and, less efficiently, Met from aminoacyl-tRNAs to the N-termini of proteins containing an N-terminal arginine or lysine. The chain is Leucyl/phenylalanyl-tRNA--protein transferase from Leptothrix cholodnii (strain ATCC 51168 / LMG 8142 / SP-6) (Leptothrix discophora (strain SP-6)).